Reading from the N-terminus, the 492-residue chain is Probable serine/threonine-protein kinase WNK9 (492 aa).

In terms of domain architecture, Protein kinase spans 25-282 (GRYNEVLGKG…ACELLDDHFL (258 aa)). Residues 105 to 108 (TEMF) and Lys-155 contribute to the ATP site. Asp-172 acts as the Proton acceptor in catalysis.

It belongs to the protein kinase superfamily. Ser/Thr protein kinase family. WNK subfamily.

It catalyses the reaction L-seryl-[protein] + ATP = O-phospho-L-seryl-[protein] + ADP + H(+). The catalysed reaction is L-threonyl-[protein] + ATP = O-phospho-L-threonyl-[protein] + ADP + H(+). Its function is as follows. May regulate flowering time by modulating the photoperiod pathway. This chain is Probable serine/threonine-protein kinase WNK9 (WNK9), found in Arabidopsis thaliana (Mouse-ear cress).